The primary structure comprises 176 residues: Ribosome maturation factor RimM (176 aa).

In terms of domain architecture, PRC barrel spans 100 to 173 (PGEFHLLDLL…WLMVCPPPGL (74 aa)).

The protein belongs to the RimM family. As to quaternary structure, binds ribosomal protein uS19.

The protein localises to the cytoplasm. An accessory protein needed during the final step in the assembly of 30S ribosomal subunit, possibly for assembly of the head region. Essential for efficient processing of 16S rRNA. May be needed both before and after RbfA during the maturation of 16S rRNA. It has affinity for free ribosomal 30S subunits but not for 70S ribosomes. The chain is Ribosome maturation factor RimM from Prochlorococcus marinus (strain SARG / CCMP1375 / SS120).